Consider the following 117-residue polypeptide: Venom protein TxLP11 (117 aa).

Residues 1 to 22 (MNTKTLIVVFLVCLLVSEVVLA) form the signal peptide.

Post-translationally, contains 4 disulfide bonds. As to expression, expressed by the venom gland.

Its subcellular location is the secreted. This is Venom protein TxLP11 from Lychas mucronatus (Chinese swimming scorpion).